The chain runs to 143 residues: Nucleoside diphosphate kinase 2 (143 aa).

6 residues coordinate ATP: lysine 11, phenylalanine 59, arginine 87, threonine 93, arginine 104, and asparagine 114. Histidine 117 functions as the Pros-phosphohistidine intermediate in the catalytic mechanism.

This sequence belongs to the NDK family. In terms of assembly, homotetramer. Requires Mg(2+) as cofactor.

It is found in the cytoplasm. The enzyme catalyses a 2'-deoxyribonucleoside 5'-diphosphate + ATP = a 2'-deoxyribonucleoside 5'-triphosphate + ADP. It carries out the reaction a ribonucleoside 5'-diphosphate + ATP = a ribonucleoside 5'-triphosphate + ADP. In terms of biological role, major role in the synthesis of nucleoside triphosphates other than ATP. The ATP gamma phosphate is transferred to the NDP beta phosphate via a ping-pong mechanism, using a phosphorylated active-site intermediate. This is Nucleoside diphosphate kinase 2 from Protochlamydia amoebophila (strain UWE25).